Reading from the N-terminus, the 261-residue chain is MDIVSHQKIRRFEAGTFQEIESSVATEYPLTIYVNDQELVTIVCTPEYLEDLVVGFLTSEGIVRGPRDINSVDIIEATGHAKVSANFVNKFNAKYRGKRYITSCCGKSRENFYFQSDASLVNVKQNGNLQLTTDMIFRLMEKFEQNSATFHQTGGVHNAALCSSAEIIYSRMDIGRHNALDKIYGRALQDGTSTEDKAIIFSGRISSEILVKTAKLGCGIILSRSAPTELAINMAEELNITTVGFIRGDRLNVYSGFERIT.

The active-site Cysteine persulfide intermediate is the Cys-105. 245 to 250 (FIRGDR) lines the Mo-bis(molybdopterin guanine dinucleotide) pocket.

It belongs to the FdhD family.

Its subcellular location is the cytoplasm. Its function is as follows. Required for formate dehydrogenase (FDH) activity. Acts as a sulfur carrier protein that transfers sulfur from IscS to the molybdenum cofactor prior to its insertion into FDH. This Listeria monocytogenes serovar 1/2a (strain ATCC BAA-679 / EGD-e) protein is Sulfur carrier protein FdhD.